The following is a 279-amino-acid chain: Thymidylate synthase (279 aa).

Residue Arg37 coordinates dUMP. His67 serves as a coordination point for (6R)-5,10-methylene-5,6,7,8-tetrahydrofolate. Arg142 to Arg143 contacts dUMP. Cys162 (nucleophile) is an active-site residue. DUMP is bound by residues Arg182–Asp185, Asn193, and His223–Tyr225. (6R)-5,10-methylene-5,6,7,8-tetrahydrofolate is bound at residue Asp185. Ser278 contributes to the (6R)-5,10-methylene-5,6,7,8-tetrahydrofolate binding site.

The protein belongs to the thymidylate synthase family. Bacterial-type ThyA subfamily. In terms of assembly, homodimer.

The protein resides in the cytoplasm. The enzyme catalyses dUMP + (6R)-5,10-methylene-5,6,7,8-tetrahydrofolate = 7,8-dihydrofolate + dTMP. Its pathway is pyrimidine metabolism; dTTP biosynthesis. In terms of biological role, catalyzes the reductive methylation of 2'-deoxyuridine-5'-monophosphate (dUMP) to 2'-deoxythymidine-5'-monophosphate (dTMP) while utilizing 5,10-methylenetetrahydrofolate (mTHF) as the methyl donor and reductant in the reaction, yielding dihydrofolate (DHF) as a by-product. This enzymatic reaction provides an intracellular de novo source of dTMP, an essential precursor for DNA biosynthesis. This Caulobacter vibrioides (strain ATCC 19089 / CIP 103742 / CB 15) (Caulobacter crescentus) protein is Thymidylate synthase.